We begin with the raw amino-acid sequence, 124 residues long: Putative transmembrane protein FLJ36131 (124 aa).

At 1–2 the chain is on the cytoplasmic side; that stretch reads MY. The chain crosses the membrane as a helical span at residues 3–23; it reads VSISFLLGLSHLVLCCLLTFI. Topologically, residues 24–124 are extracellular; it reads VNFYLPPESI…LLTTTSYSVS (101 aa). Asparagine 41 carries N-linked (GlcNAc...) asparagine glycosylation.

The protein localises to the membrane. The protein is Putative transmembrane protein FLJ36131 of Homo sapiens (Human).